The following is a 325-amino-acid chain: Phosphatidylserine decarboxylase proenzyme (325 aa).

Active-site charge relay system; for autoendoproteolytic cleavage activity residues include Asp-90, His-147, and Ser-253. The active-site Schiff-base intermediate with substrate; via pyruvic acid; for decarboxylase activity is Ser-253. Ser-253 is modified (pyruvic acid (Ser); by autocatalysis). Residues 281–325 (MASKMSSQKAITPEQTTETPVQASNEFDDNAGETKKDTPSEGADS) are disordered. Over residues 284–305 (KMSSQKAITPEQTTETPVQASN) the composition is skewed to polar residues.

The protein belongs to the phosphatidylserine decarboxylase family. PSD-B subfamily. Prokaryotic type I sub-subfamily. In terms of assembly, heterodimer of a large membrane-associated beta subunit and a small pyruvoyl-containing alpha subunit. Pyruvate is required as a cofactor. Is synthesized initially as an inactive proenzyme. Formation of the active enzyme involves a self-maturation process in which the active site pyruvoyl group is generated from an internal serine residue via an autocatalytic post-translational modification. Two non-identical subunits are generated from the proenzyme in this reaction, and the pyruvate is formed at the N-terminus of the alpha chain, which is derived from the carboxyl end of the proenzyme. The autoendoproteolytic cleavage occurs by a canonical serine protease mechanism, in which the side chain hydroxyl group of the serine supplies its oxygen atom to form the C-terminus of the beta chain, while the remainder of the serine residue undergoes an oxidative deamination to produce ammonia and the pyruvoyl prosthetic group on the alpha chain. During this reaction, the Ser that is part of the protease active site of the proenzyme becomes the pyruvoyl prosthetic group, which constitutes an essential element of the active site of the mature decarboxylase.

It is found in the cell membrane. It catalyses the reaction a 1,2-diacyl-sn-glycero-3-phospho-L-serine + H(+) = a 1,2-diacyl-sn-glycero-3-phosphoethanolamine + CO2. It participates in phospholipid metabolism; phosphatidylethanolamine biosynthesis; phosphatidylethanolamine from CDP-diacylglycerol: step 2/2. In terms of biological role, catalyzes the formation of phosphatidylethanolamine (PtdEtn) from phosphatidylserine (PtdSer). This is Phosphatidylserine decarboxylase proenzyme from Alteromonas mediterranea (strain DSM 17117 / CIP 110805 / LMG 28347 / Deep ecotype).